The chain runs to 375 residues: Membrane progesterone receptor epsilon (375 aa).

The segment at 1 to 39 is disordered; that stretch reads MPRRLQQRGAGVKGPPASTSRRSHPASASAPRSPPAATT. Residues 1 to 84 lie on the Cytoplasmic side of the membrane; sequence MPRRLQQRGA…VLKPTNETLN (84 aa). Over residues 15-39 the composition is skewed to low complexity; the sequence is PPASTSRRSHPASASAPRSPPAATT. The chain crosses the membrane as a helical span at residues 85–105; that stretch reads FWTHFIPLLLFLSKFCRLFFL. Residues 106-114 are Extracellular-facing; it reads GGSDVPFHH. Residues 115–135 form a helical membrane-spanning segment; that stretch reads PWLLPLWCYASGVLLTFAMSC. At 136–160 the chain is on the cytoplasmic side; the sequence is TAHVFSCLSLRLRAAFFYLDYASIS. A helical transmembrane segment spans residues 161–181; it reads YYGFGSTVAYYYYLLPSLSLL. Over 182-203 the chain is Extracellular; sequence DARVMTPYVQQRLGWHVDCTRL. The helical transmembrane segment at 204–224 threads the bilayer; the sequence is IAVYRALVLPVAFVLAVACTV. Topologically, residues 225–241 are cytoplasmic; sequence ACCKSRTDWCSYPFALR. A helical transmembrane segment spans residues 242 to 262; that stretch reads TFVFVMPLSMACPIMLESWLF. The Extracellular portion of the chain corresponds to 263–299; the sequence is DLRGENPTLFVHFYRRYFWLVVAAFFNVSKIPERIQP. A helical membrane pass occupies residues 300–320; the sequence is GLFDIIGHSHQLFHIFTFLSI. At 321-341 the chain is on the cytoplasmic side; sequence YDQVYYVEEGLRQFLQAPPAA. The helical transmembrane segment at 342–362 threads the bilayer; it reads PTFSGTVGYMLLLVVCLGLVI. Topologically, residues 363–375 are extracellular; that stretch reads RKFLNSTEFCSKK.

It belongs to the ADIPOR family. Homodimer.

Its subcellular location is the cell membrane. Plasma membrane progesterone (P4) receptor coupled to G proteins. Seems to act through a G(s) mediated pathway. May be involved in regulating rapid P4 signaling in the nervous system. Also binds dehydroepiandrosterone (DHEA), pregnanolone, pregnenolone and allopregnanolone. The polypeptide is Membrane progesterone receptor epsilon (Mus musculus (Mouse)).